Here is a 255-residue protein sequence, read N- to C-terminus: 2-dehydro-3,6-dideoxy-6-sulfogluconate aldolase (255 aa).

Histidine 38 acts as the Proton acceptor in catalysis. Residues glutamate 141 and aspartate 167 each contribute to the a divalent metal cation site.

Belongs to the HpcH/HpaI aldolase family. In terms of assembly, homohexamer; trimer of dimers. Requires a divalent metal cation as cofactor.

The enzyme catalyses 2-dehydro-3,6-dideoxy-6-sulfo-D-gluconate = (2S)-3-sulfolactaldehyde + pyruvate. In terms of biological role, catalyzes the retro-aldol cleavage of 2-dehydro-3,6-dideoxy-6-sulfo-D-gluconate to (2S)-3-sulfolactaldehyde and pyruvate. Is involved in a degradation pathway of sulfoquinovose (SQ) that allows P.putida SQ1 to use SQ as the sole carbon and energy source for growth. This is 2-dehydro-3,6-dideoxy-6-sulfogluconate aldolase from Pseudomonas putida (Arthrobacter siderocapsulatus).